Here is a 557-residue protein sequence, read N- to C-terminus: Potassium-transporting ATPase potassium-binding subunit (557 aa).

10 consecutive transmembrane segments (helical) span residues 6 to 26 (IQLL…GLGL), 59 to 79 (ALSL…ILFF), 127 to 147 (AGLT…LLAL), 172 to 192 (LYVL…FGVV), 247 to 267 (ISNF…VFLY), 278 to 298 (WAIF…VWTF), 363 to 383 (IVFG…LLTV), 410 to 430 (ILGI…SVSV), 475 to 495 (VMIA…VLVI), and 520 to 540 (FYIL…FPVL).

The protein belongs to the KdpA family. As to quaternary structure, the system is composed of three essential subunits: KdpA, KdpB and KdpC.

The protein resides in the cell inner membrane. In terms of biological role, part of the high-affinity ATP-driven potassium transport (or Kdp) system, which catalyzes the hydrolysis of ATP coupled with the electrogenic transport of potassium into the cytoplasm. This subunit binds the periplasmic potassium ions and delivers the ions to the membrane domain of KdpB through an intramembrane tunnel. This chain is Potassium-transporting ATPase potassium-binding subunit, found in Leptospira interrogans serogroup Icterohaemorrhagiae serovar copenhageni (strain Fiocruz L1-130).